The chain runs to 479 residues: MAISCAVGMEMQEPKMNGTLSTGAAAGYRQEREGFLPTTHGPAPGRKPVQFLDFEGKTSFGMSVFNLSNAIMGSGILGLAYAMAHTGVIFFLALLLCIALLSSYSIHLLLTCASVVGIRAYEQLGQRAFGPAGKVVVAIIICLHNVGAMSSYLFIIKSELPLVIGTFLHMDPEGDWFLKGNLLIILVSLLIILPLALMKHLGYLGYTSSLSLTCMLFFLISVIYKKFQLGCVVSHNDTVVESEPAPLQAFNSSCEAKLFTVDSQMSYTVPIMAFAFVCHPEVLPIYTELCCPTQRRMQAVANMSIGAMFIMYGLTATFGYLTFYSTVKAEMLEMYTQEDLLILCVRLAVLLAVTLTVPVVLFPIRRALQQLLFPSKAFSWPRHVAIALILLILVNILVICVPTIRDIFGFIGSTSAPSLIFILPSVFYLRIVPADMEPLFSWPKIQALCFGVLGVLFMAISLGFMFANWATGQSRMSGH.

Residues 1 to 58 are Cytoplasmic-facing; sequence MAISCAVGMEMQEPKMNGTLSTGAAAGYRQEREGFLPTTHGPAPGRKPVQFLDFEGKT. A helical membrane pass occupies residues 59–81; that stretch reads SFGMSVFNLSNAIMGSGILGLAY. Over 82–97 the chain is Extracellular; sequence AMAHTGVIFFLALLLC. Residues 98–118 traverse the membrane as a helical segment; sequence IALLSSYSIHLLLTCASVVGI. Residues 119–135 lie on the Cytoplasmic side of the membrane; sequence RAYEQLGQRAFGPAGKV. Residues 136–156 traverse the membrane as a helical segment; it reads VVAIIICLHNVGAMSSYLFII. The Extracellular segment spans residues 157–176; the sequence is KSELPLVIGTFLHMDPEGDW. A helical membrane pass occupies residues 177-197; that stretch reads FLKGNLLIILVSLLIILPLAL. Residues 198–202 lie on the Cytoplasmic side of the membrane; sequence MKHLG. Residues 203-223 traverse the membrane as a helical segment; that stretch reads YLGYTSSLSLTCMLFFLISVI. Topologically, residues 224 to 264 are extracellular; sequence YKKFQLGCVVSHNDTVVESEPAPLQAFNSSCEAKLFTVDSQ. Cys-231 and Cys-254 are oxidised to a cystine. An N-linked (GlcNAc...) asparagine glycan is attached at Asn-236. Residues 265–285 form a helical membrane-spanning segment; it reads MSYTVPIMAFAFVCHPEVLPI. Residues 286–302 are Cytoplasmic-facing; the sequence is YTELCCPTQRRMQAVAN. Residues 303 to 323 form a helical membrane-spanning segment; sequence MSIGAMFIMYGLTATFGYLTF. Residues 324–341 are Extracellular-facing; it reads YSTVKAEMLEMYTQEDLL. The helical transmembrane segment at 342-362 threads the bilayer; sequence ILCVRLAVLLAVTLTVPVVLF. At 363–383 the chain is on the cytoplasmic side; the sequence is PIRRALQQLLFPSKAFSWPRH. Residues 384–404 traverse the membrane as a helical segment; sequence VAIALILLILVNILVICVPTI. Over 405-406 the chain is Extracellular; that stretch reads RD. Residues 407–427 form a helical membrane-spanning segment; the sequence is IFGFIGSTSAPSLIFILPSVF. Residues 428-446 lie on the Cytoplasmic side of the membrane; that stretch reads YLRIVPADMEPLFSWPKIQ. A helical transmembrane segment spans residues 447–467; it reads ALCFGVLGVLFMAISLGFMFA. Over 468-479 the chain is Extracellular; it reads NWATGQSRMSGH.

It belongs to the amino acid/polyamine transporter 2 family. As to expression, highly expressed in neocortex, hippocampus, striatum and spinal cord by astrocytes (at protein level). Expressed in brain, lung, stomach, kidney, spleen and testis. Expressed in the cerebral cortex between the second and third postnatal week, where expressed exclusively in glial cells from postnatal day 14 to adulthood (at protein level). Expressed in the cerebellum at post natal day 12 (P12). Expressed in liver. Expressed inside the cell body of the astrocytes.

It localises to the cell membrane. It catalyses the reaction L-serine(out) + Na(+)(out) + H(+)(in) = L-serine(in) + Na(+)(in) + H(+)(out). The enzyme catalyses L-alanine(out) + Na(+)(out) + H(+)(in) = L-alanine(in) + Na(+)(in) + H(+)(out). The catalysed reaction is glycine(out) + Na(+)(out) + H(+)(in) = glycine(in) + Na(+)(in) + H(+)(out). It carries out the reaction L-glutamine(out) + Na(+)(out) + H(+)(in) = L-glutamine(in) + Na(+)(in) + H(+)(out). It catalyses the reaction L-asparagine(out) + Na(+)(out) + H(+)(in) = L-asparagine(in) + Na(+)(in) + H(+)(out). The enzyme catalyses L-histidine(out) + Na(+)(out) + H(+)(in) = L-histidine(in) + Na(+)(in) + H(+)(out). The catalysed reaction is L-cysteine(out) + Na(+)(out) + H(+)(in) = L-cysteine(in) + Na(+)(in) + H(+)(out). With respect to regulation, not inhibited by lithium. Partial allosteric regulation on ions sodium binding. In terms of biological role, symporter that cotransports neutral amino acids and sodium ions, coupled to an H(+) antiporter activity. Releases L-glutamine and glycine from astroglial cells and may participate in the glutamate/GABA-glutamine cycle and the NMDA receptors activation. In addition contributes significantly to L-glutamine uptake in retina, namely in ganglion and Mueller cells and, therefore participates in the retinal glutamate-glutamine cycle. The transport activity is pH sensitive, Li(+) tolerant, bidirectional and associated with large uncoupled fluxes of protons. The transport is electroneutral coupled to the cotransport of 1 Na(+) and the antiport of 1 H(+). May have particular importance for modulation of net hepatic glutamine flux. The chain is Sodium-coupled neutral amino acid transporter 5 from Rattus norvegicus (Rat).